A 212-amino-acid polypeptide reads, in one-letter code: Eukaryotic translation initiation factor 4E-1 (212 aa).

Cysteine 125 and cysteine 129 form a disulfide bridge.

Belongs to the eukaryotic initiation factor 4E family. EIF4F is a multi-subunit complex, the composition of which varies with external and internal environmental conditions. It is composed of at least EIF4A, EIF4E and EIF4G. EIF4E is also known to interact with other partners, including pgl-1. Interacts with ifet-1. As to expression, enriched in the germline from L3 larvae to adults; regions of the gonad undergoing spermatogenesis. Expressed in germ granules (P granules); when associated with pgl-1.

It is found in the cytoplasm. In terms of biological role, recognizes and binds the 7-methylguanosine-containing mRNA cap during an early step in the initiation of protein synthesis and facilitates ribosome binding by inducing the unwinding of the mRNAs secondary structures. All 5 eIF4E proteins bind monomethyl cap structures. Only ife-1, ife-2 and ife-5 bind trimethyl cap structures which result from trans-splicing. Translation of trimethyl cap structure mRNAs may be regulated by intracellular redox state; disulfide bonds change the width and depth of the cap-binding cavity determining selectivity to mRNA caps. Required for progression through meiotic divisions during spermatogenesis and for the production of viable sperm. It is not required during oogenesis. The chain is Eukaryotic translation initiation factor 4E-1 (ife-1) from Caenorhabditis elegans.